The sequence spans 185 residues: Ribonuclease M5 (185 aa).

The Toprim domain occupies 4 to 87; that stretch reads KEIIVVEGKD…AFLPKEEALA (84 aa). Mg(2+) is bound by residues Glu-10, Asp-56, and Asp-58.

Belongs to the ribonuclease M5 family. The cofactor is Mg(2+).

Its subcellular location is the cytoplasm. It carries out the reaction Endonucleolytic cleavage of RNA, removing 21 and 42 nucleotides, respectively, from the 5'- and 3'-termini of a 5S-rRNA precursor.. Its function is as follows. Required for correct processing of both the 5' and 3' ends of 5S rRNA precursor. Cleaves both sides of a double-stranded region yielding mature 5S rRNA in one step. In Bacillus anthracis, this protein is Ribonuclease M5.